The primary structure comprises 255 residues: UPF0246 protein DP0358 (255 aa).

Belongs to the UPF0246 family.

This Desulfotalea psychrophila (strain LSv54 / DSM 12343) protein is UPF0246 protein DP0358.